Consider the following 365-residue polypeptide: Flagellar P-ring protein (365 aa).

An N-terminal signal peptide occupies residues 1 to 21 (MKSLRLVALFCCLLPLGMAHA).

Belongs to the FlgI family. In terms of assembly, the basal body constitutes a major portion of the flagellar organelle and consists of four rings (L,P,S, and M) mounted on a central rod.

It is found in the periplasm. The protein localises to the bacterial flagellum basal body. Functionally, assembles around the rod to form the L-ring and probably protects the motor/basal body from shearing forces during rotation. The chain is Flagellar P-ring protein from Aeromonas hydrophila subsp. hydrophila (strain ATCC 7966 / DSM 30187 / BCRC 13018 / CCUG 14551 / JCM 1027 / KCTC 2358 / NCIMB 9240 / NCTC 8049).